Consider the following 231-residue polypeptide: Superoxide dismutase [Mn], mitochondrial (231 aa).

The transit peptide at Met1–Gly27 directs the protein to the mitochondrion. The Mn(2+) site is built by His55, His103, Asp192, and His196.

This sequence belongs to the iron/manganese superoxide dismutase family. Homotetramer. The cofactor is Mn(2+).

It is found in the mitochondrion matrix. It carries out the reaction 2 superoxide + 2 H(+) = H2O2 + O2. Functionally, destroys superoxide anion radicals which are normally produced within the cells and which are toxic to biological systems. This is Superoxide dismutase [Mn], mitochondrial (SODA) from Oryza sativa subsp. japonica (Rice).